A 201-amino-acid chain; its full sequence is Pro-P-factor (201 aa).

A signal peptide spans 1 to 20 (MKITAVIALLFSLAAASPIP). 5 propeptides span residues 21–31 (VADPGVVSVSK), 58–65 (EFEAAPAK), 92–99 (EFEAAPEK), 126–133 (EFEAAPAK), and 160–201 (TEED…KFES). 2 N-linked (GlcNAc...) asparagine glycosylation sites follow: asparagine 187 and asparagine 194.

In terms of processing, proteolytically cleaved by kpr, probably at the C-terminal side of dibasic Lys-Arg residues. Post-translationally, glycosylated. Most of the precursor molecules are glycosylated on at least one site, but only a small proportion are glycosylated on both sites.

It is found in the secreted. In terms of biological role, in h- cells under nutritional starvation, P-factor induces alteration of cell morphology toward mating, arrest of the cell cycle at the G1 phase prior to the initiation of DNA synthesis and indirect transcriptional activation of the sxa2 gene which down-regulates the signaling pathway. This chain is Pro-P-factor (map2), found in Schizosaccharomyces pombe (strain 972 / ATCC 24843) (Fission yeast).